The chain runs to 356 residues: MKELVNILDFLPEELGEKIKPMFRVKQIYQWIYQKYANNFSDMSSLPKDLRLELAQNFHFSPVKCVKNEQSKDGSIKYLFELIDGLRVESVLLPMKKEKINTEGKRISHARYTICVSSQVGCKSGCSFCLTAKGGLKRNLSTGEIVGQILWIKKQNNIPYERRVNIVYMGMGEPLDNLKNVSKAVKILAQNDGLAISPRRQTISTSGLAKQIKELGQMNLGVLLAISLHAVNDELRTELMPINKAYNIAAIMDAVREFPIDQRKRVMFEYLLIDGINDKLEHAKELVKLLNGIKAKVNLILFNPHEGSLYKRPSLENAIKFQDLLSNKGVTCTIRESKGLDISAACGQLKERAKEQ.

Glu-89 serves as the catalytic Proton acceptor. In terms of domain architecture, Radical SAM core spans 108-341 (SHARYTICVS…CTIRESKGLD (234 aa)). Cys-115 and Cys-346 are disulfide-bonded. [4Fe-4S] cluster is bound by residues Cys-122, Cys-126, and Cys-129. Residues 172–173 (GE), Ser-204, 227–229 (SLH), and Asn-303 each bind S-adenosyl-L-methionine. Cys-346 serves as the catalytic S-methylcysteine intermediate.

Belongs to the radical SAM superfamily. RlmN family. The cofactor is [4Fe-4S] cluster.

It localises to the cytoplasm. It carries out the reaction adenosine(2503) in 23S rRNA + 2 reduced [2Fe-2S]-[ferredoxin] + 2 S-adenosyl-L-methionine = 2-methyladenosine(2503) in 23S rRNA + 5'-deoxyadenosine + L-methionine + 2 oxidized [2Fe-2S]-[ferredoxin] + S-adenosyl-L-homocysteine. It catalyses the reaction adenosine(37) in tRNA + 2 reduced [2Fe-2S]-[ferredoxin] + 2 S-adenosyl-L-methionine = 2-methyladenosine(37) in tRNA + 5'-deoxyadenosine + L-methionine + 2 oxidized [2Fe-2S]-[ferredoxin] + S-adenosyl-L-homocysteine. Its function is as follows. Specifically methylates position 2 of adenine 2503 in 23S rRNA and position 2 of adenine 37 in tRNAs. m2A2503 modification seems to play a crucial role in the proofreading step occurring at the peptidyl transferase center and thus would serve to optimize ribosomal fidelity. The chain is Dual-specificity RNA methyltransferase RlmN from Campylobacter jejuni subsp. jejuni serotype O:23/36 (strain 81-176).